We begin with the raw amino-acid sequence, 36 residues long: Conotoxin Cal6.1h (36 aa).

A propeptide spanning residues 1–7 (GLGRPSR) is cleaved from the precursor. 3 disulfides stabilise this stretch: C9-C25, C16-C29, and C24-C34.

The protein belongs to the conotoxin O1 superfamily. Expressed by the venom duct.

The protein resides in the secreted. Probable neurotoxin with unknown target. Possibly targets ion channels. This chain is Conotoxin Cal6.1h, found in Californiconus californicus (California cone).